A 952-amino-acid polypeptide reads, in one-letter code: Glycine dehydrogenase (decarboxylating) (952 aa).

Lys703 is modified (N6-(pyridoxal phosphate)lysine).

The protein belongs to the GcvP family. The glycine cleavage system is composed of four proteins: P, T, L and H. It depends on pyridoxal 5'-phosphate as a cofactor.

It catalyses the reaction N(6)-[(R)-lipoyl]-L-lysyl-[glycine-cleavage complex H protein] + glycine + H(+) = N(6)-[(R)-S(8)-aminomethyldihydrolipoyl]-L-lysyl-[glycine-cleavage complex H protein] + CO2. Functionally, the glycine cleavage system catalyzes the degradation of glycine. The P protein binds the alpha-amino group of glycine through its pyridoxal phosphate cofactor; CO(2) is released and the remaining methylamine moiety is then transferred to the lipoamide cofactor of the H protein. The protein is Glycine dehydrogenase (decarboxylating) of Mycolicibacterium gilvum (strain PYR-GCK) (Mycobacterium gilvum (strain PYR-GCK)).